A 204-amino-acid polypeptide reads, in one-letter code: High frequency lysogenization protein HflD homolog (204 aa).

This sequence belongs to the HflD family.

The protein resides in the cytoplasm. The protein localises to the cell inner membrane. This Aeromonas hydrophila subsp. hydrophila (strain ATCC 7966 / DSM 30187 / BCRC 13018 / CCUG 14551 / JCM 1027 / KCTC 2358 / NCIMB 9240 / NCTC 8049) protein is High frequency lysogenization protein HflD homolog.